The following is a 331-amino-acid chain: Isopenicillin N synthase (331 aa).

Isopenicillin N contacts are provided by Arg87, Tyr91, Ser183, and Tyr189. N-[(5S)-5-amino-5-carboxypentanoyl]-L-cysteinyl-D-valine contacts are provided by Arg87, Tyr91, Ser183, Tyr189, His214, and Asp216. A Fe2OG dioxygenase domain is found at Leu181–Leu288. His214, Asp216, and His270 together coordinate Fe(2+). Position 279 (Arg279) interacts with 2-oxoglutarate. Ser281 contributes to the isopenicillin N binding site. Ser281 contacts N-[(5S)-5-amino-5-carboxypentanoyl]-L-cysteinyl-D-valine.

The protein belongs to the iron/ascorbate-dependent oxidoreductase family. It depends on Fe(2+) as a cofactor.

Its subcellular location is the cytoplasm. The protein localises to the cytosol. The catalysed reaction is N-[(5S)-5-amino-5-carboxypentanoyl]-L-cysteinyl-D-valine + O2 = isopenicillin N + 2 H2O. It participates in antibiotic biosynthesis; penicillin G biosynthesis; penicillin G from L-alpha-aminoadipate and L-cysteine and L-valine: step 2/3. Functionally, isopenicillin N synthase; part of the gene cluster that mediates the biosynthesis of penicillin, the world's most important antibiotic. The first step of the pathway is performed by the trimodular NRPS acvA that produces the tripeptide N-[(5S)-5-amino-5-carboxypentanoyl]-L-cysteinyl-D-valine (LLD-ACV or ACV) via condensation of the 3 residues L-2-aminoadipate, L-cysteine and L-valine. The precursor amino acids for penicillin biosynthesis are withdrawn from the vacuolar amino acid pool by the MFS-type transporter penV. Each of the constituent amino acids of the tripeptide acv are activated as aminoacyl-adenylates with peptide bonds formed through the participation of amino acid thioester intermediates. The tripeptide ACV is then cyclized to form isopenicillin N (IPN) by the isopenicillin N synthase ipnA that forms the beta-lactam nucleus. Finally, the alpha-aminoadipyl side chain is exchanged for phenylacetic acid by the isopenicillin N acyltransferase aatA to yield penicillin. This step occurs in the peroxisomal matrix and the penM and paaT transporters are involved in the isopenicillin N and phenylacetic acid import into the peroxisome, respectively. This is Isopenicillin N synthase from Penicillium rubens (strain ATCC 28089 / DSM 1075 / NRRL 1951 / Wisconsin 54-1255) (Penicillium chrysogenum).